A 507-amino-acid chain; its full sequence is ATP synthase subunit alpha, chloroplastic (507 aa).

Residue 170 to 177 participates in ATP binding; the sequence is GDRQTGKT.

This sequence belongs to the ATPase alpha/beta chains family. As to quaternary structure, F-type ATPases have 2 components, CF(1) - the catalytic core - and CF(0) - the membrane proton channel. CF(1) has five subunits: alpha(3), beta(3), gamma(1), delta(1), epsilon(1). CF(0) has four main subunits: a, b, b' and c.

Its subcellular location is the plastid. The protein localises to the chloroplast thylakoid membrane. It carries out the reaction ATP + H2O + 4 H(+)(in) = ADP + phosphate + 5 H(+)(out). Produces ATP from ADP in the presence of a proton gradient across the membrane. The alpha chain is a regulatory subunit. This Silene latifolia (White campion) protein is ATP synthase subunit alpha, chloroplastic.